Reading from the N-terminus, the 33-residue chain is MSDIN-like toxin proprotein 2 (33 aa).

Positions 1–10 are excised as a propeptide; it reads MSDINATRLP. Residues 11–18 constitute a cross-link (cyclopeptide (Ile-Pro)); it reads IILAPIIP. Residues 19–33 constitute a propeptide that is removed on maturation; the sequence is CINDDVNSTLTSGER.

It belongs to the MSDIN fungal toxin family. In terms of processing, processed by the macrocyclase-peptidase enzyme POPB to yield a toxic cyclic octapeptide. POPB first removes 10 residues from the N-terminus. Conformational trapping of the remaining peptide forces the enzyme to release this intermediate rather than proceed to macrocyclization. The enzyme rebinds the remaining peptide in a different conformation and catalyzes macrocyclization of the N-terminal 8 residues.

In terms of biological role, probable toxin that belongs to the MSDIN-like toxin family responsible for a large number of food poisoning cases and deaths. In Amanita phalloides (Death cap), this protein is MSDIN-like toxin proprotein 2.